Reading from the N-terminus, the 151-residue chain is Ribosome maturation factor RimP (151 aa).

The protein belongs to the RimP family.

It is found in the cytoplasm. Required for maturation of 30S ribosomal subunits. The sequence is that of Ribosome maturation factor RimP from Vibrio cholerae serotype O1 (strain ATCC 39541 / Classical Ogawa 395 / O395).